Reading from the N-terminus, the 729-residue chain is Fatty acid oxidation complex subunit alpha (729 aa).

Residues 1 to 189 (MLYKGDTLYL…KIGLVDGVVK (189 aa)) are enoyl-CoA hydratase/isomerase. Residue D296 coordinates substrate. Residues 311-729 (ETPKQAAVLG…ARPVGDLKTA (419 aa)) form a 3-hydroxyacyl-CoA dehydrogenase region. Residues M324, D343, 400–402 (VVE), K407, and S429 contribute to the NAD(+) site. The For 3-hydroxyacyl-CoA dehydrogenase activity role is filled by H450. Residue N453 participates in NAD(+) binding. N500 and Y660 together coordinate substrate. Residues 708–729 (RHNEPYYPPVEPARPVGDLKTA) form a disordered region.

This sequence in the N-terminal section; belongs to the enoyl-CoA hydratase/isomerase family. It in the C-terminal section; belongs to the 3-hydroxyacyl-CoA dehydrogenase family. Heterotetramer of two alpha chains (FadB) and two beta chains (FadA).

The catalysed reaction is a (3S)-3-hydroxyacyl-CoA + NAD(+) = a 3-oxoacyl-CoA + NADH + H(+). The enzyme catalyses a (3S)-3-hydroxyacyl-CoA = a (2E)-enoyl-CoA + H2O. It catalyses the reaction a 4-saturated-(3S)-3-hydroxyacyl-CoA = a (3E)-enoyl-CoA + H2O. It carries out the reaction (3S)-3-hydroxybutanoyl-CoA = (3R)-3-hydroxybutanoyl-CoA. The catalysed reaction is a (3Z)-enoyl-CoA = a 4-saturated (2E)-enoyl-CoA. The enzyme catalyses a (3E)-enoyl-CoA = a 4-saturated (2E)-enoyl-CoA. It functions in the pathway lipid metabolism; fatty acid beta-oxidation. In terms of biological role, involved in the aerobic and anaerobic degradation of long-chain fatty acids via beta-oxidation cycle. Catalyzes the formation of 3-oxoacyl-CoA from enoyl-CoA via L-3-hydroxyacyl-CoA. It can also use D-3-hydroxyacyl-CoA and cis-3-enoyl-CoA as substrate. The polypeptide is Fatty acid oxidation complex subunit alpha (Escherichia coli O7:K1 (strain IAI39 / ExPEC)).